The chain runs to 87 residues: Acylphosphatase (87 aa).

An Acylphosphatase-like domain is found at 1–87; it reads MAWVHGRVQG…EDYQDFRIRY (87 aa). Catalysis depends on residues arginine 14 and asparagine 32.

Belongs to the acylphosphatase family.

The catalysed reaction is an acyl phosphate + H2O = a carboxylate + phosphate + H(+). The sequence is that of Acylphosphatase (acyP) from Cronobacter sakazakii (strain ATCC BAA-894) (Enterobacter sakazakii).